The chain runs to 959 residues: Ribonucleoside-diphosphate reductase large subunit (959 aa).

Residues Thr68, 83–84 (SC), and Gly112 contribute to the substrate site. Cysteines 84 and 626 form a disulfide. The active-site Proton acceptor is Asn270. The DOD-type homing endonuclease domain maps to 378 to 508 (LPTLFGNSEH…IQLLLIGMGV (131 aa)). Catalysis depends on Cys611, which acts as the Cysteine radical intermediate. Glu613 serves as the catalytic Proton acceptor. Substrate is bound at residue 751–755 (PTATS).

It belongs to the ribonucleoside diphosphate reductase large chain family. Heterotetramer composed of a homodimer of the large subunit (R1) and a homodimer of the small subunit (R2). Larger multisubunit protein complex are also active, composed of (R1)n(R2)n.

The enzyme catalyses a 2'-deoxyribonucleoside 5'-diphosphate + [thioredoxin]-disulfide + H2O = a ribonucleoside 5'-diphosphate + [thioredoxin]-dithiol. Its activity is regulated as follows. Under complex allosteric control mediated by deoxynucleoside triphosphates and ATP binding. The type of nucleotide bound at the specificity site determines substrate preference. It seems probable that ATP makes the enzyme reduce CDP and UDP, dGTP favors ADP reduction and dTTP favors GDP reduction. Its function is as follows. Ribonucleoside-diphosphate reductase holoenzyme provides the precursors necessary for viral DNA synthesis. Allows virus growth in non-dividing cells. Catalyzes the biosynthesis of deoxyribonucleotides from the corresponding ribonucleotides. This chain is Ribonucleoside-diphosphate reductase large subunit, found in Acheta domesticus (House cricket).